Reading from the N-terminus, the 512-residue chain is MDLEADPWRVNSEENGNNISGSVWEPDNSSVNALKSYSADSLQQEANKRVNDDYLGVNIFSNGDNIVRGTASNVYQNDVLWDRPNIGSTTQETDIRGVNRFQATDTPQYAANDEYKNWVESVRKTYFPLAEDIVSVEEIPEREGLVFKHTNYLVKHLTPLPNTDPSDDRTVVRRYSDFDWLQDVLLRKYPFRMVPELPPKKIGSQNADPLFLAKRRKGLSRFINLVMKHPVLRSDDLVLTFLTVPTDLSGWRKQAHYDTTDEFTDKHISSSFMNLWRKEFSEQWNKADERIDIALDTWVKVTVLIERYEKRMKQVAHERKLLGQILNAIPDTTEALYPQSTATVSQINEGVGLIVEHLNSCADVIERENEEVDSGLSVRFKAFIDVIIALKGLFERYKMMAGNNIPQLQRRVEINQERLNTLESNPDVKGAEYDRVKQSISRDKRSILDQMNRSWLIRECILEEFTIFHETQFLITDCFQRWIEINLRYTNNNVDNWEKICKKLRDMPLQRH.

The disordered stretch occupies residues 1–24; the sequence is MDLEADPWRVNSEENGNNISGSVW. Positions 13–22 are enriched in low complexity; that stretch reads EENGNNISGS. The PX domain maps to 130–248; that stretch reads AEDIVSVEEI…LTFLTVPTDL (119 aa). Residues arginine 174, serine 176, lysine 200, and arginine 215 each coordinate a 1,2-diacyl-sn-glycero-3-phospho-(1D-myo-inositol-3-phosphate).

The protein belongs to the sorting nexin family.

Its subcellular location is the cytoplasm. It is found in the membrane. Required for vacuolar protein sorting. This is Sorting nexin MVP1 (MVP1) from Kluyveromyces lactis (strain ATCC 8585 / CBS 2359 / DSM 70799 / NBRC 1267 / NRRL Y-1140 / WM37) (Yeast).